A 315-amino-acid chain; its full sequence is tRNA dimethylallyltransferase (315 aa).

18–25 lines the ATP pocket; that stretch reads GPTASGKT. 20–25 serves as a coordination point for substrate; the sequence is TASGKT. Interaction with substrate tRNA stretches follow at residues 43–46, 167–171, and 248–253; these read DSAL, QRLSR, and RCVGYR.

It belongs to the IPP transferase family. Monomer. Mg(2+) serves as cofactor.

The catalysed reaction is adenosine(37) in tRNA + dimethylallyl diphosphate = N(6)-dimethylallyladenosine(37) in tRNA + diphosphate. In terms of biological role, catalyzes the transfer of a dimethylallyl group onto the adenine at position 37 in tRNAs that read codons beginning with uridine, leading to the formation of N6-(dimethylallyl)adenosine (i(6)A). The polypeptide is tRNA dimethylallyltransferase (Pseudoalteromonas atlantica (strain T6c / ATCC BAA-1087)).